We begin with the raw amino-acid sequence, 186 residues long: ADP-ribosylation factor-like protein 8B (186 aa).

An intramembrane region (note=Mediates targeting to membranes) is located at residues 1–19 (MLALISRLLDWFRSLFWKE). Residues 29-35 (QYSGKTT), 71-75 (DIGGQ), and 130-133 (NKRD) each bind GTP. A Glycyl lysine isopeptide (Lys-Gly) (interchain with G-Cter in ubiquitin) cross-link involves residue K141.

The protein belongs to the small GTPase superfamily. Arf family. Interacts with tubulin. Interacts with BORCS5; recruits ARL8B to lysosomes. Interacts with VPS41; the interaction mediates the recruitment of the HOPS complex to lysosomes. Interacts (GTP-bound form) with PLEKHM2 (via RUN domain); the interaction is required to recruit the motor protein kinesin-1 on lysosomes. Interacts (GTP-bound form) with PLEKHM1 (via RUN domain); the interaction is required for PLEKHM1 localization to lysosomes and for ARL8B function in delivery and degradation of endocytic and autophagic cargo in lysosomes. PLEKHM1 and PLEKHM2 compete for interaction with ARL8B. Interacts (GTP-bound form) with RUFY1; the interaction is required for RUFY1 endosomal location. When GTP-bound, interacts with RUFY3 and RUFY4, but not with RUFY1, nor RUFY2. In terms of processing, ubiquitinated at Lys-141 by RNF167, leading to its degradation.

The protein localises to the late endosome membrane. It localises to the lysosome membrane. The protein resides in the cytoplasm. It is found in the cytoskeleton. Its subcellular location is the spindle. The protein localises to the cell projection. It localises to the axon. The protein resides in the synapse. It is found in the cytolytic granule membrane. Its subcellular location is the early endosome membrane. The catalysed reaction is GTP + H2O = GDP + phosphate + H(+). Functionally, small GTPase which cycles between active GTP-bound and inactive GDP-bound states. In its active state, binds to a variety of effector proteins playing a key role in the regulation of lysosomal positioning which is important for nutrient sensing, natural killer cell-mediated cytotoxicity and antigen presentation. Along with its effectors, orchestrates lysosomal transport and fusion. Localizes specifically to lysosomal membranes and mediates anterograde lysosomal motility by recruiting PLEKHM2, which in turn recruits the motor protein kinesin-1 on lysosomes. Required for lysosomal and cytolytic granule exocytosis. Critical factor involved in NK cell-mediated cytotoxicity. Drives the polarization of cytolytic granules and microtubule-organizing centers (MTOCs) toward the immune synapse between effector NK lymphocytes and target cells. In neurons, mediates the anterograde axonal long-range transport of presynaptic lysosome-related vesicles required for presynaptic biogenesis and synaptic function. Also acts as a regulator of endosome to lysosome trafficking pathways of special significance for host defense. Recruits RUFY1 onto early endosomes regulating endosomes to trans-Golgi network proteins retrieval. Regulates cargo trafficking to lysosomes by binding to PLEKHM1 and recruiting the HOPS subunit VPS41, resulting in functional assembly of the HOPS complex on lysosomal membranes. Plays an important role in cargo delivery to lysosomes for antigen presentation and microbial killing. Directs the intersection of CD1d with lipid antigens in lysosomes, and plays a role in intersecting phagosomes with lysosomes to generate phagolysosomes that kill microbes. Involved in the process of MHC II presentation. Regulates the delivery of antigens to lysosomes and the formation of MHC II-peptide complexes through the recruitment of the HOPS complex to lysosomes allowing the fusion of late endosomes to lysosomes. May play a role in chromosome segregation. The sequence is that of ADP-ribosylation factor-like protein 8B (ARL8B) from Macaca fascicularis (Crab-eating macaque).